Here is a 144-residue protein sequence, read N- to C-terminus: Acylphosphatase-like protein MJ1331 (144 aa).

Residues 8 to 100 (TYELRIYGNV…FPNGLNKIST (93 aa)) form the Acylphosphatase-like domain.

The sequence is that of Acylphosphatase-like protein MJ1331 from Methanocaldococcus jannaschii (strain ATCC 43067 / DSM 2661 / JAL-1 / JCM 10045 / NBRC 100440) (Methanococcus jannaschii).